We begin with the raw amino-acid sequence, 371 residues long: RNA-binding protein 48 (371 aa).

The region spanning 46-124 (QYLLIQGVPA…GLLHVCYAPE (79 aa)) is the RRM domain. 2 disordered regions span residues 157-191 (KPVP…PESP) and 348-371 (VPKP…RRRI). Basic and acidic residues predominate over residues 158-170 (PVPEQKGTKDSRQ).

Belongs to the RBM48 family. As to quaternary structure, component of the minor spliceosome. Within this complex, interacts with ARMC7 and PRPF8/PRP8.

Its function is as follows. As a component of the minor spliceosome, involved in the splicing of U12-type introns in pre-mRNAs. The polypeptide is RNA-binding protein 48 (Rbm48) (Mus musculus (Mouse)).